We begin with the raw amino-acid sequence, 100 residues long: Urease subunit gamma (100 aa).

Belongs to the urease gamma subunit family. Heterotrimer of UreA (gamma), UreB (beta) and UreC (alpha) subunits. Three heterotrimers associate to form the active enzyme.

Its subcellular location is the cytoplasm. The enzyme catalyses urea + 2 H2O + H(+) = hydrogencarbonate + 2 NH4(+). The protein operates within nitrogen metabolism; urea degradation; CO(2) and NH(3) from urea (urease route): step 1/1. The polypeptide is Urease subunit gamma (Staphylococcus aureus (strain N315)).